A 115-amino-acid chain; its full sequence is NADH-ubiquinone oxidoreductase chain 3 (115 aa).

The next 3 membrane-spanning stretches (helical) occupy residues 3–23 (LMLA…IAFW), 55–75 (FFLV…LLPL), and 84–104 (LNTM…SLAY).

Belongs to the complex I subunit 3 family. As to quaternary structure, core subunit of respiratory chain NADH dehydrogenase (Complex I) which is composed of 45 different subunits. Interacts with TMEM186. Interacts with TMEM242.

The protein resides in the mitochondrion inner membrane. The catalysed reaction is a ubiquinone + NADH + 5 H(+)(in) = a ubiquinol + NAD(+) + 4 H(+)(out). Its function is as follows. Core subunit of the mitochondrial membrane respiratory chain NADH dehydrogenase (Complex I) which catalyzes electron transfer from NADH through the respiratory chain, using ubiquinone as an electron acceptor. Essential for the catalytic activity of complex I. This is NADH-ubiquinone oxidoreductase chain 3 from Bos indicus (Zebu).